Here is a 501-residue protein sequence, read N- to C-terminus: Arabinose import ATP-binding protein AraG (501 aa).

ABC transporter domains are found at residues 4 to 239 (LEFN…MVGR) and 252 to 495 (LGDN…LPDK). Position 36–43 (36–43 (GENGAGKS)) interacts with ATP.

Belongs to the ABC transporter superfamily. Arabinose importer (TC 3.A.1.2.2) family. The complex is composed of two ATP-binding proteins (AraG), two transmembrane proteins (AraH) and a solute-binding protein (AraF).

Its subcellular location is the cell inner membrane. The catalysed reaction is L-arabinose(out) + ATP + H2O = L-arabinose(in) + ADP + phosphate + H(+). Part of the ABC transporter complex AraFGH involved in arabinose import. Responsible for energy coupling to the transport system. In Rhizobium etli (strain ATCC 51251 / DSM 11541 / JCM 21823 / NBRC 15573 / CFN 42), this protein is Arabinose import ATP-binding protein AraG.